A 436-amino-acid chain; its full sequence is Lactonohydrolase oryL (436 aa).

Residues 1-27 (MLSYTSHCLQALLGVASLPYRQYQAYS) form the signal peptide.

It belongs to the SMP-30/CGR1 family.

The protein operates within secondary metabolite biosynthesis. Lactonohydrolase; part of the gene cluster that mediates the biosynthesis of oryzines, natural products with an unusual maleidride backbone. The two subunits of the fungal fatty acid synthase oryfasA and oryfasB probably form octenoic acid. This fatty acid is most likely activated by the acyl-CoA ligase oryP to give octenyl-CoA before the citrate synthase-like protein oryE catalyzes condensation with oxaloacetate to form tricarboxylic acid. The next steps of the pathways are conjectural, but a favorite possible route has been proposed, beginning with decarboxylation and concomitant dehydration by the decarboxylase oryM, followed by tautomerization, which may lead to the production of a diene intermediate. Reduction of this diene intermediate could give the known metabolite piliformic acid. On the pathway to oryzine B and oryzine A, however, hydroxylation of the diene by the alpha-ketoglutarate-dependent dioxygenase oryG and lactonisation by the lactonohydrolases oryH or oryL could give oryzine B directly. Finally, enoyl reduction by the dehydrogenase oryD would then convert oryzine B into oryzine A. The protein is Lactonohydrolase oryL of Aspergillus oryzae (strain ATCC 42149 / RIB 40) (Yellow koji mold).